Reading from the N-terminus, the 803-residue chain is MIPVTEFRQFSEQQPAFRVLKPWWDVFTDYLSVAMLMIGVFGCTLQVMQDKIICLPKRVQPAQNHSSLSNVSQTVINTTPLPPPKPSPTNPATVEMKGLKTDLDLQQYSFINQMCYERALHWYAKYFPYLVLIHTLVFMLCSNFWFKFPGSSSKIEHFISILGKCFDSPWTTRALSEVSGEDSEEKDNRKNNMNRSNTIQSGPEGSLVKSQSLKSIPEKFVVDKSTAGALDKKEGEQAKALFEKVKKFRLHVEEGDILYAMYVRQTVLKVIKFLIIIAYNSALVSKVQFTVDCNVDIQDMTGYKNFSCNHTMAHLFSKLSFCYLCFVSIYGLTCLYTLYWLFYRSLREYSFEYVRQETGIDDIPDVKNDFAFMLHMIDQYDPLYSKRFAVFLSEVSENKLKQLNLNNEWTPDKLRQKLQTNAHNRLELPLIMLSGLPDTVFEITELQSLKLEIIKNVMIPATIAQLDNLQELSLHQCSVKIHSAALSFLKENLKVLSVKFDDMRELPPWMYGLRNLEELYLVGSLSHDISKNVTLESLRDLKSLKILSIKSNVSKIPQAVVDVSSHLQKMCIHNDGTKLVMLNNLKKMTNLTELELVHCDLERIPHAVFSLLSLQELDLKENNLKSIEEIVSFQHLRKLTVLKLWYNSIAYIPEHIKKLTSLERLFFSHNKVEVLPSHLFLCNKIRYLDLSYNDIRFIPPEIGVLQSLQYFSITCNKVESLPDELYFCKKLKTLKIGKNSLSVLSPKIGNLLFLSYLDIKGNHFEVLPPELGDCRALKRAGLVVEDALFETLPSDVREQMKAD.

Topologically, residues 1–22 are cytoplasmic; sequence MIPVTEFRQFSEQQPAFRVLKP. A helical membrane pass occupies residues 23-43; the sequence is WWDVFTDYLSVAMLMIGVFGC. Residues 44 to 125 lie on the Extracellular side of the membrane; that stretch reads TLQVMQDKII…YERALHWYAK (82 aa). Cystine bridges form between Cys54–Cys308 and Cys115–Cys293. N-linked (GlcNAc...) asparagine glycosylation is found at Asn64 and Asn70. Residues 126-146 traverse the membrane as a helical segment; that stretch reads YFPYLVLIHTLVFMLCSNFWF. Residues 147–266 are Cytoplasmic-facing; that stretch reads KFPGSSSKIE…ILYAMYVRQT (120 aa). The tract at residues 177–211 is disordered; that stretch reads EVSGEDSEEKDNRKNNMNRSNTIQSGPEGSLVKSQ. Positions 191–211 are enriched in polar residues; the sequence is NNMNRSNTIQSGPEGSLVKSQ. A phosphoserine mark is found at Ser212 and Ser215. A helical transmembrane segment spans residues 267–287; it reads VLKVIKFLIIIAYNSALVSKV. Topologically, residues 288–320 are extracellular; the sequence is QFTVDCNVDIQDMTGYKNFSCNHTMAHLFSKLS. Residues 321–341 traverse the membrane as a helical segment; sequence FCYLCFVSIYGLTCLYTLYWL. The Cytoplasmic segment spans residues 342–803; that stretch reads FYRSLREYSF…SDVREQMKAD (462 aa). LRR repeat units lie at residues 397 to 420, 421 to 443, 446 to 466, 467 to 488, 490 to 513, 515 to 537, 541 to 563, 565 to 587, 588 to 611, 613 to 635, 637 to 659, 660 to 682, 684 to 705, 706 to 728, 730 to 751, 752 to 774, and 776 to 799; these read ENKL…KLQT, NAHN…VFEI, LQSL…IAQL, DNLQ…ALSF, KENL…MYGL, NLEE…TLES, LKSL…VVDV, SHLQ…NLKK, MTNL…VFSL, SLQE…SFQH, RKLT…IKKL, TSLE…LFLC, KIRY…IGVL, QSLQ…LYFC, KLKT…IGNL, LFLS…LGDC, and ALKR…VREQ.

The protein belongs to the LRRC8 family. In terms of assembly, heterohexamer; oligomerizes with other LRRC8 proteins (LRRC8A, LRRC8B, LRRC8D and/or LRRC8E) to form a heterohexamer. Homoheptamer; inactive, likely because it is not targeted to the plasma membrane in the absence of LRRC8A. In vivo, the subunit composition may depend primarily on expression levels, and heterooligomeric channels containing various proportions of the different LRRC8 proteins may coexist.

The protein resides in the cell membrane. The protein localises to the endoplasmic reticulum membrane. It carries out the reaction chloride(in) = chloride(out). The enzyme catalyses iodide(out) = iodide(in). It catalyses the reaction taurine(out) = taurine(in). The catalysed reaction is 2',3'-cGAMP(out) = 2',3'-cGAMP(in). Its function is as follows. Non-essential component of the volume-regulated anion channel (VRAC, also named VSOAC channel), an anion channel required to maintain a constant cell volume in response to extracellular or intracellular osmotic changes. The VRAC channel conducts iodide better than chloride and can also conduct organic osmolytes like taurine. Plays a redundant role in the efflux of amino acids, such as aspartate and glutamate, in response to osmotic stress. The VRAC channel also mediates transport of immunoreactive cyclic dinucleotide GMP-AMP (2'-3'-cGAMP), an immune messenger produced in response to DNA virus in the cytosol. Channel activity requires LRRC8A plus at least one other family member (LRRC8B, LRRC8C, LRRC8D or LRRC8E); channel characteristics depend on the precise subunit composition. The chain is Volume-regulated anion channel subunit LRRC8C from Rattus norvegicus (Rat).